A 74-amino-acid chain; its full sequence is Sec-independent protein translocase protein TatA (74 aa).

A helical transmembrane segment spans residues M1 to G21. The disordered stretch occupies residues E51–S74. Residues T64–S74 show a composition bias toward basic and acidic residues.

The protein belongs to the TatA/E family. In terms of assembly, the Tat system comprises two distinct complexes: a TatABC complex, containing multiple copies of TatA, TatB and TatC subunits, and a separate TatA complex, containing only TatA subunits. Substrates initially bind to the TatABC complex, which probably triggers association of the separate TatA complex to form the active translocon.

It localises to the cell inner membrane. In terms of biological role, part of the twin-arginine translocation (Tat) system that transports large folded proteins containing a characteristic twin-arginine motif in their signal peptide across membranes. TatA could form the protein-conducting channel of the Tat system. In Caulobacter vibrioides (strain ATCC 19089 / CIP 103742 / CB 15) (Caulobacter crescentus), this protein is Sec-independent protein translocase protein TatA.